The sequence spans 156 residues: Small ribosomal subunit protein uS7 (156 aa).

This sequence belongs to the universal ribosomal protein uS7 family. As to quaternary structure, part of the 30S ribosomal subunit. Contacts proteins S9 and S11.

Its function is as follows. One of the primary rRNA binding proteins, it binds directly to 16S rRNA where it nucleates assembly of the head domain of the 30S subunit. Is located at the subunit interface close to the decoding center, probably blocks exit of the E-site tRNA. This is Small ribosomal subunit protein uS7 from Mycobacterium tuberculosis (strain CDC 1551 / Oshkosh).